We begin with the raw amino-acid sequence, 334 residues long: S-adenosylmethionine:tRNA ribosyltransferase-isomerase (334 aa).

The protein belongs to the QueA family. Monomer.

It is found in the cytoplasm. It catalyses the reaction 7-aminomethyl-7-carbaguanosine(34) in tRNA + S-adenosyl-L-methionine = epoxyqueuosine(34) in tRNA + adenine + L-methionine + 2 H(+). It participates in tRNA modification; tRNA-queuosine biosynthesis. In terms of biological role, transfers and isomerizes the ribose moiety from AdoMet to the 7-aminomethyl group of 7-deazaguanine (preQ1-tRNA) to give epoxyqueuosine (oQ-tRNA). In Thermosipho melanesiensis (strain DSM 12029 / CIP 104789 / BI429), this protein is S-adenosylmethionine:tRNA ribosyltransferase-isomerase.